The following is a 54-amino-acid chain: Putative collagen-like domain-containing protein 065L (54 aa).

The segment at 1–54 is disordered; that stretch reads MRGLEAPGAVGPTGPSGAPGSQGPDGDVGGMGPEGPKGDDGPVGPKGPQGAAIF. The Collagen-like domain occupies 7 to 51; the sequence is PGAVGPTGPSGAPGSQGPDGDVGGMGPEGPKGDDGPVGPKGPQGA. Positions 26–35 are enriched in gly residues; the sequence is GDVGGMGPEG. Residues 42 to 54 show a composition bias toward low complexity; sequence PVGPKGPQGAAIF.

The protein is Putative collagen-like domain-containing protein 065L of Dryophytes versicolor (chameleon treefrog).